A 102-amino-acid polypeptide reads, in one-letter code: Small ribosomal subunit protein uS10 (102 aa).

The protein belongs to the universal ribosomal protein uS10 family. Part of the 30S ribosomal subunit.

Its function is as follows. Involved in the binding of tRNA to the ribosomes. The protein is Small ribosomal subunit protein uS10 of Parvibaculum lavamentivorans (strain DS-1 / DSM 13023 / NCIMB 13966).